The chain runs to 327 residues: Beta-ketoacyl-[acyl-carrier-protein] synthase III (327 aa).

Catalysis depends on residues Cys114 and His254. An ACP-binding region spans residues 255-259; sequence QANQR. Asn284 is a catalytic residue.

It belongs to the thiolase-like superfamily. FabH family. In terms of assembly, homodimer.

It is found in the cytoplasm. It carries out the reaction malonyl-[ACP] + acetyl-CoA + H(+) = 3-oxobutanoyl-[ACP] + CO2 + CoA. It participates in lipid metabolism; fatty acid biosynthesis. Catalyzes the condensation reaction of fatty acid synthesis by the addition to an acyl acceptor of two carbons from malonyl-ACP. Catalyzes the first condensation reaction which initiates fatty acid synthesis and may therefore play a role in governing the total rate of fatty acid production. Possesses both acetoacetyl-ACP synthase and acetyl transacylase activities. Its substrate specificity determines the biosynthesis of branched-chain and/or straight-chain of fatty acids. The protein is Beta-ketoacyl-[acyl-carrier-protein] synthase III of Levilactobacillus brevis (strain ATCC 367 / BCRC 12310 / CIP 105137 / JCM 1170 / LMG 11437 / NCIMB 947 / NCTC 947) (Lactobacillus brevis).